The chain runs to 156 residues: Small ribosomal subunit protein uS7 (156 aa).

Belongs to the universal ribosomal protein uS7 family. As to quaternary structure, part of the 30S ribosomal subunit. Contacts proteins S9 and S11.

One of the primary rRNA binding proteins, it binds directly to 16S rRNA where it nucleates assembly of the head domain of the 30S subunit. Is located at the subunit interface close to the decoding center, probably blocks exit of the E-site tRNA. The sequence is that of Small ribosomal subunit protein uS7 from Chlorobaculum parvum (strain DSM 263 / NCIMB 8327) (Chlorobium vibrioforme subsp. thiosulfatophilum).